The primary structure comprises 284 residues: Bifunctional protein FolD (284 aa).

NADP(+) contacts are provided by residues 166–168 and isoleucine 232; that span reads GAS.

Belongs to the tetrahydrofolate dehydrogenase/cyclohydrolase family. In terms of assembly, homodimer.

It carries out the reaction (6R)-5,10-methylene-5,6,7,8-tetrahydrofolate + NADP(+) = (6R)-5,10-methenyltetrahydrofolate + NADPH. It catalyses the reaction (6R)-5,10-methenyltetrahydrofolate + H2O = (6R)-10-formyltetrahydrofolate + H(+). The protein operates within one-carbon metabolism; tetrahydrofolate interconversion. In terms of biological role, catalyzes the oxidation of 5,10-methylenetetrahydrofolate to 5,10-methenyltetrahydrofolate and then the hydrolysis of 5,10-methenyltetrahydrofolate to 10-formyltetrahydrofolate. This is Bifunctional protein FolD from Shewanella baltica (strain OS195).